The primary structure comprises 339 residues: Heat-inducible transcription repressor HrcA (339 aa).

This sequence belongs to the HrcA family.

Functionally, negative regulator of class I heat shock genes (grpE-dnaK-dnaJ and groELS operons). Prevents heat-shock induction of these operons. In Paraburkholderia xenovorans (strain LB400), this protein is Heat-inducible transcription repressor HrcA.